The following is a 98-amino-acid chain: DNA-binding protein Fis (98 aa).

A DNA-binding region (H-T-H motif) is located at residues 74–93; that stretch reads QTRAALMMGINRGTLRKKLK.

The protein belongs to the transcriptional regulatory Fis family. As to quaternary structure, homodimer.

Functionally, activates ribosomal RNA transcription. Plays a direct role in upstream activation of rRNA promoters. The polypeptide is DNA-binding protein Fis (Citrobacter koseri (strain ATCC BAA-895 / CDC 4225-83 / SGSC4696)).